Reading from the N-terminus, the 229-residue chain is Probable queuosine precursor transporter (229 aa).

Transmembrane regions (helical) follow at residues 6–26 (FWIF…KGFG), 28–48 (MGLF…VVKT), 49–69 (VELF…IFFA), 86–106 (VWLG…VLLF), 118–138 (LETI…AFIF), 160–182 (LWLR…FTAV), and 192–214 (VWLH…SLPY).

It belongs to the vitamin uptake transporter (VUT/ECF) (TC 2.A.88) family. Q precursor transporter subfamily.

It is found in the cell membrane. Its function is as follows. Involved in the import of queuosine (Q) precursors, required for Q precursor salvage. This Bacillus subtilis (strain 168) protein is Probable queuosine precursor transporter (ypdP).